Here is a 604-residue protein sequence, read N- to C-terminus: Elongation factor 4 (604 aa).

The tr-type G domain maps to 7 to 189 (SKIRNFCIIA…SIVHLVPPPS (183 aa)). Residues 19–24 (DHGKST) and 136–139 (NKID) each bind GTP.

Belongs to the TRAFAC class translation factor GTPase superfamily. Classic translation factor GTPase family. LepA subfamily.

It is found in the cell inner membrane. The catalysed reaction is GTP + H2O = GDP + phosphate + H(+). Required for accurate and efficient protein synthesis under certain stress conditions. May act as a fidelity factor of the translation reaction, by catalyzing a one-codon backward translocation of tRNAs on improperly translocated ribosomes. Back-translocation proceeds from a post-translocation (POST) complex to a pre-translocation (PRE) complex, thus giving elongation factor G a second chance to translocate the tRNAs correctly. Binds to ribosomes in a GTP-dependent manner. In Synechococcus elongatus (strain ATCC 33912 / PCC 7942 / FACHB-805) (Anacystis nidulans R2), this protein is Elongation factor 4.